The sequence spans 312 residues: Putative tricarboxylate transport protein, mitochondrial (312 aa).

3 Solcar repeats span residues 23-111, 122-208, and 218-303; these read EKTV…LKSQ, VMRL…LKDW, and ISKP…IIEF. Transmembrane regions (helical) follow at residues 29-49, 75-95, 126-146, 164-184, 221-241, and 286-306; these read IVIGGITGGIEICITFPTEYV, VNGHGFFGLYRGLSVLLYGSI, LCGLGAGLSEAVFAVTPMETV, FVHGVGCIVKAEGLGGIYKGV, PIVGLMGAVAGAASVYGNTPI, and VCLDVGITFMIYDSIIEFLDV.

Belongs to the mitochondrial carrier (TC 2.A.29) family.

The protein localises to the mitochondrion inner membrane. Its function is as follows. Transport of citrate across inner mitochondrial membrane. This chain is Putative tricarboxylate transport protein, mitochondrial, found in Caenorhabditis elegans.